The chain runs to 500 residues: Lysine--tRNA ligase (500 aa).

Mg(2+)-binding residues include Glu-410 and Glu-417.

Belongs to the class-II aminoacyl-tRNA synthetase family. In terms of assembly, homodimer. Mg(2+) is required as a cofactor.

It is found in the cytoplasm. It catalyses the reaction tRNA(Lys) + L-lysine + ATP = L-lysyl-tRNA(Lys) + AMP + diphosphate. In Pseudomonas savastanoi pv. phaseolicola (strain 1448A / Race 6) (Pseudomonas syringae pv. phaseolicola (strain 1448A / Race 6)), this protein is Lysine--tRNA ligase.